Here is a 323-residue protein sequence, read N- to C-terminus: Quinolinate synthase (323 aa).

Iminosuccinate-binding residues include His39 and Ser56. Residue Cys101 coordinates [4Fe-4S] cluster. Residues 127 to 129 and Ser144 contribute to the iminosuccinate site; that span reads YIN. Cys187 contacts [4Fe-4S] cluster. Iminosuccinate contacts are provided by residues 213–215 and Thr230; that span reads HPE. Cys280 lines the [4Fe-4S] cluster pocket.

The protein belongs to the quinolinate synthase family. Type 2 subfamily. The cofactor is [4Fe-4S] cluster.

It localises to the cytoplasm. The enzyme catalyses iminosuccinate + dihydroxyacetone phosphate = quinolinate + phosphate + 2 H2O + H(+). Its pathway is cofactor biosynthesis; NAD(+) biosynthesis; quinolinate from iminoaspartate: step 1/1. Functionally, catalyzes the condensation of iminoaspartate with dihydroxyacetone phosphate to form quinolinate. The polypeptide is Quinolinate synthase (Chlorobium phaeobacteroides (strain DSM 266 / SMG 266 / 2430)).